Reading from the N-terminus, the 496-residue chain is Cytochrome c-552 (496 aa).

The signal sequence occupies residues 1–23; that stretch reads MKKYKFLFAISIIAIGLMTVLLA. A heme c-binding site is contributed by histidine 100. Heme contacts are provided by cysteine 128, cysteine 131, and lysine 132. Cysteine 166, cysteine 169, histidine 170, cysteine 210, cysteine 213, and histidine 214 together coordinate heme c. Ca(2+) is bound by residues glutamate 216, tyrosine 217, lysine 269, and glutamine 271. Substrate is bound at residue tyrosine 217. Residue histidine 272 participates in substrate binding. Residues histidine 283, cysteine 290, cysteine 293, histidine 294, histidine 308, cysteine 321, cysteine 324, histidine 325, and histidine 400 each coordinate heme c.

This sequence belongs to the cytochrome c-552 family. The cofactor is Ca(2+). Heme c serves as cofactor.

It is found in the periplasm. The enzyme catalyses 6 Fe(III)-[cytochrome c] + NH4(+) + 2 H2O = 6 Fe(II)-[cytochrome c] + nitrite + 8 H(+). It participates in nitrogen metabolism; nitrate reduction (assimilation). In terms of biological role, catalyzes the reduction of nitrite to ammonia, consuming six electrons in the process. The polypeptide is Cytochrome c-552 (Aliarcobacter butzleri (strain RM4018) (Arcobacter butzleri)).